A 380-amino-acid chain; its full sequence is Proline iminopeptidase (380 aa).

The AB hydrolase-1 domain occupies 98–360; sequence PVVFLHGGPG…IVYDAGHSAN (263 aa). Ser-172 (nucleophile) is an active-site residue. The active site involves Asp-329. His-357 functions as the Proton donor in the catalytic mechanism.

The protein belongs to the peptidase S33 family.

The protein localises to the cytoplasm. It carries out the reaction Release of N-terminal proline from a peptide.. Specifically catalyzes the removal of N-terminal proline residues from peptides. The protein is Proline iminopeptidase (PIP) of Arabidopsis thaliana (Mouse-ear cress).